Reading from the N-terminus, the 469-residue chain is Glutamate--tRNA ligase (469 aa).

The short motif at 11–21 (PSPTGFIHLGN) is the 'HIGH' region element. Residues 118-131 (GEKPRYDGTWRPEP) are compositionally biased toward basic and acidic residues. Residues 118–138 (GEKPRYDGTWRPEPGKVLPEP) form a disordered region. The short motif at 243-247 (KMSKR) is the 'KMSKS' region element. An ATP-binding site is contributed by K246.

It belongs to the class-I aminoacyl-tRNA synthetase family. Glutamate--tRNA ligase type 1 subfamily. In terms of assembly, monomer.

It is found in the cytoplasm. It carries out the reaction tRNA(Glu) + L-glutamate + ATP = L-glutamyl-tRNA(Glu) + AMP + diphosphate. Functionally, catalyzes the attachment of glutamate to tRNA(Glu) in a two-step reaction: glutamate is first activated by ATP to form Glu-AMP and then transferred to the acceptor end of tRNA(Glu). This Burkholderia thailandensis (strain ATCC 700388 / DSM 13276 / CCUG 48851 / CIP 106301 / E264) protein is Glutamate--tRNA ligase.